A 144-amino-acid polypeptide reads, in one-letter code: Transcriptional regulator MraZ (144 aa).

2 consecutive SpoVT-AbrB domains span residues 5 to 50 (TFNH…ALPQ) and 81 to 124 (AHEV…DRAA).

It belongs to the MraZ family. Forms oligomers.

It localises to the cytoplasm. It is found in the nucleoid. The chain is Transcriptional regulator MraZ from Anaeromyxobacter dehalogenans (strain 2CP-C).